A 52-amino-acid polypeptide reads, in one-letter code: Insulin (52 aa).

Cystine bridges form between cysteine 9–cysteine 38, cysteine 21–cysteine 51, and cysteine 37–cysteine 42.

The protein belongs to the insulin family. As to quaternary structure, heterodimer of a B chain and an A chain linked by two disulfide bonds.

The protein localises to the secreted. Insulin decreases blood glucose concentration. It increases cell permeability to monosaccharides, amino acids and fatty acids. It accelerates glycolysis, the pentose phosphate cycle, and glycogen synthesis in liver. This chain is Insulin (ins), found in Piaractus mesopotamicus (Small-scaled pacu).